Reading from the N-terminus, the 358-residue chain is DnaJ homolog subfamily B member 11 (358 aa).

The N-terminal stretch at 1 to 22 (MAPQNLSTFCLLLLYLIGAVIA) is a signal peptide. Residues 25–90 (DFYKILGVPR…EKRKQYDTYG (66 aa)) enclose the J domain. T188 is subject to Phosphothreonine. The N-linked (GlcNAc...) asparagine glycan is linked to N261.

In terms of assembly, part of a large chaperone multiprotein complex comprising DNAJB11, HSP90B1, HSPA5, HYOU, PDIA2, PDIA4, PDIA6, PPIB, SDF2L1, UGGT1 and very small amounts of ERP29, but not, or at very low levels, CALR nor CANX. Binds to denatured substrates in an ATP-independent manner. Interacts via the J domain with HSPA5 in an ATP-dependent manner. Contains high-mannose Endo H-sensitive carbohydrates. In terms of processing, cys-169, Cys-171, Cys-193 and Cys-196 form intramolecular disulfide bonds. The preferential partner for each Cys is not known.

It is found in the endoplasmic reticulum lumen. Its function is as follows. As a co-chaperone for HSPA5 it is required for proper folding, trafficking or degradation of proteins. Binds directly to both unfolded proteins that are substrates for ERAD and nascent unfolded peptide chains, but dissociates from the HSPA5-unfolded protein complex before folding is completed. May help recruiting HSPA5 and other chaperones to the substrate. Stimulates HSPA5 ATPase activity. It is necessary for maturation and correct trafficking of PKD1. This is DnaJ homolog subfamily B member 11 (Dnajb11) from Rattus norvegicus (Rat).